Here is a 227-residue protein sequence, read N- to C-terminus: Ribonuclease 3 (227 aa).

Residues 3–130 form the RNase III domain; it reads TNAISKIIKY…LIGAIYLDGG (128 aa). Glu-43 is a Mg(2+) binding site. The active site involves Asp-47. The Mg(2+) site is built by Asn-116 and Glu-119. The active site involves Glu-119. One can recognise a DRBM domain in the interval 155-224; sequence DAKTILQEWA…ASLMLAKINY (70 aa).

This sequence belongs to the ribonuclease III family. Homodimer. Mg(2+) is required as a cofactor.

It is found in the cytoplasm. The catalysed reaction is Endonucleolytic cleavage to 5'-phosphomonoester.. Its function is as follows. Digests double-stranded RNA. Involved in the processing of primary rRNA transcript to yield the immediate precursors to the large and small rRNAs (23S and 16S). Processes some mRNAs, and tRNAs when they are encoded in the rRNA operon. Processes pre-crRNA and tracrRNA of type II CRISPR loci if present in the organism. The chain is Ribonuclease 3 from Ehrlichia ruminantium (strain Gardel).